The chain runs to 364 residues: Peptide chain release factor 1 (364 aa).

Q237 is modified (N5-methylglutamine).

The protein belongs to the prokaryotic/mitochondrial release factor family. In terms of processing, methylated by PrmC. Methylation increases the termination efficiency of RF1.

The protein localises to the cytoplasm. Functionally, peptide chain release factor 1 directs the termination of translation in response to the peptide chain termination codons UAG and UAA. The protein is Peptide chain release factor 1 of Mycoplasma mycoides subsp. mycoides SC (strain CCUG 32753 / NCTC 10114 / PG1).